Here is a 340-residue protein sequence, read N- to C-terminus: Armadillo repeat-containing protein 12 (340 aa).

An interaction with TBC1D15 region spans residues 1-101; that stretch reads MGKSIPQYLG…SITRCVYLLE (101 aa). 3 ARM repeats span residues 100–139, 179–218, and 278–318; these read LEAE…AFSG, LPDY…YLAQ, and SLHE…SLQY.

As to quaternary structure, interacts with TBC1D15, TBC1D21, GK2 and IMMT. Interacts with VDAC2 and VDAC3 in a TBC1D21-dependent manner. Interacts (via ARM domains) with RBBP4. In terms of tissue distribution, expressed in testis. Highly expressed in the mid-piece of the elongated and late spermatids. Expressed at higher levels in neuroblastoma tissues and cell lines, than those of normal dorsal ganglia (at protein level). Expressed in breast cancer, colon cancer, hepatocellular carcinoma, lung cancer, pancreas cancer, prostate cancer, renal cancer and gastric cancer, but not in their normal counterparts.

The protein localises to the nucleus. Its subcellular location is the mitochondrion outer membrane. Functionally, essential for male fertility and sperm mitochondrial sheath formation. Required for proper mitochondrial elongation and coiling along the flagellum during the formation of the mitochondrial sheath. Facilitates the growth and aggressiveness of neuroblastoma cells. Increases the EZH2 activity and H3K27me3 levels in a RBBP4-dependent manner, and facilitates the enrichment of polycomb repressive complex 2 and H3K27me3 on gene promoters, resulting in transcriptional repression of tumor suppressors affecting the proliferation, invasion, and metastasis of tumor cells. The chain is Armadillo repeat-containing protein 12 (ARMC12) from Homo sapiens (Human).